Consider the following 308-residue polypeptide: D-alanine--D-alanine ligase (308 aa).

The ATP-grasp domain maps to 105–302 (KAIFRSLGLA…FPDLCDRILD (198 aa)). ATP is bound at residue 133 to 188 (DLPFGLPCVVKPAGEGSSVGVHLVNAAAELGPACRDAAGYAGDVIVERYVKGTEVD). Residues aspartate 256, glutamate 269, and asparagine 271 each contribute to the Mg(2+) site.

Belongs to the D-alanine--D-alanine ligase family. Requires Mg(2+) as cofactor. Mn(2+) is required as a cofactor.

It localises to the cytoplasm. The enzyme catalyses 2 D-alanine + ATP = D-alanyl-D-alanine + ADP + phosphate + H(+). The protein operates within cell wall biogenesis; peptidoglycan biosynthesis. Functionally, cell wall formation. The polypeptide is D-alanine--D-alanine ligase (Anaeromyxobacter dehalogenans (strain 2CP-C)).